The sequence spans 74 residues: uncharacterized protein (74 aa).

The chain crosses the membrane as a helical span at residues 7–26; the sequence is IHLYVMASAMSSSPIFFFFQ.

It localises to the membrane. This is an uncharacterized protein from Homo sapiens (Human).